The following is a 63-amino-acid chain: uncharacterized protein (63 aa).

This is an uncharacterized protein from Archaeoglobus fulgidus (strain ATCC 49558 / DSM 4304 / JCM 9628 / NBRC 100126 / VC-16).